Reading from the N-terminus, the 577-residue chain is Arginine--tRNA ligase (577 aa).

The 'HIGH' region motif lies at 122-132 (PNVAKEMHVGH).

It belongs to the class-I aminoacyl-tRNA synthetase family. In terms of assembly, monomer.

The protein resides in the cytoplasm. It carries out the reaction tRNA(Arg) + L-arginine + ATP = L-arginyl-tRNA(Arg) + AMP + diphosphate. This is Arginine--tRNA ligase from Escherichia coli O6:K15:H31 (strain 536 / UPEC).